The following is a 1407-amino-acid chain: DNA-directed RNA polymerase subunit beta' (1407 aa).

The Zn(2+) site is built by Cys-70, Cys-72, Cys-85, and Cys-88. Mg(2+) contacts are provided by Asp-460, Asp-462, and Asp-464. Zn(2+) contacts are provided by Cys-814, Cys-888, Cys-895, and Cys-898.

Belongs to the RNA polymerase beta' chain family. The RNAP catalytic core consists of 2 alpha, 1 beta, 1 beta' and 1 omega subunit. When a sigma factor is associated with the core the holoenzyme is formed, which can initiate transcription. Mg(2+) serves as cofactor. Requires Zn(2+) as cofactor.

The catalysed reaction is RNA(n) + a ribonucleoside 5'-triphosphate = RNA(n+1) + diphosphate. Functionally, DNA-dependent RNA polymerase catalyzes the transcription of DNA into RNA using the four ribonucleoside triphosphates as substrates. The chain is DNA-directed RNA polymerase subunit beta' from Salmonella paratyphi A (strain ATCC 9150 / SARB42).